A 339-amino-acid polypeptide reads, in one-letter code: DNA-directed RNA polymerase subunit alpha (339 aa).

The tract at residues 1–235 (MVIQKNWQEL…DQLQVFVNFE (235 aa)) is alpha N-terminal domain (alpha-NTD). The segment at 251 to 339 (FNPALLKKVD…DLAKRFEEHY (89 aa)) is alpha C-terminal domain (alpha-CTD).

It belongs to the RNA polymerase alpha chain family. In terms of assembly, homodimer. The RNAP catalytic core consists of 2 alpha, 1 beta, 1 beta' and 1 omega subunit. When a sigma factor is associated with the core the holoenzyme is formed, which can initiate transcription.

It catalyses the reaction RNA(n) + a ribonucleoside 5'-triphosphate = RNA(n+1) + diphosphate. Functionally, DNA-dependent RNA polymerase catalyzes the transcription of DNA into RNA using the four ribonucleoside triphosphates as substrates. The polypeptide is DNA-directed RNA polymerase subunit alpha (Methylorubrum extorquens (strain CM4 / NCIMB 13688) (Methylobacterium extorquens)).